The sequence spans 569 residues: BICD family-like cargo adapter 1 (569 aa).

Residues 1–36 (MSASCLDLISAPPQPDSDRMDRALNPGRQNSPDTAG) are disordered. The CC1 box signature appears at 97–101 (AAKLG). The stretch at 102 to 283 (KALLERNQDL…TLELEKHCHH (182 aa)) forms a coiled coil. Residues 385 to 405 (ALSTDSSMDESSETLSAKDVP) are disordered. A coiled-coil region spans residues 458-520 (NEQLQSAIRD…LEAWQDDMHR (63 aa)). The interval 533 to 554 (EWKDPPFSFSRRGAAASRPTQR) is disordered.

The protein belongs to the BICDR family. In terms of assembly, part of a tripartite complex with dynein and dynactin, acts an adapter linking the dynein motor complex and dynactin. Highly expressed in developing neural tissues and developing eye.

It localises to the cytoplasm. The protein localises to the cytoskeleton. The protein resides in the microtubule organizing center. Its subcellular location is the centrosome. Its function is as follows. Acts as an adapter protein linking the dynein motor complex to various cargos and converts dynein from a non-processive to a highly processive motor in the presence of dynactin. Facilitates the interaction between dynein and dynactin and activates dynein processivity (the ability to move along a microtubule for a long distance without falling off the track). Predominantly recruits 2 dyneins, which increases both the force and speed of the microtubule motor. Component of secretory vesicle machinery in developing neurons that acts as a regulator of neurite outgrowth. Regulates the secretory vesicle transport by controlling the accumulation of Rab6-containing secretory vesicles in the pericentrosomal region restricting anterograde secretory transport during the early phase of neuronal differentiation, thereby inhibiting neuritogenesis. The polypeptide is BICD family-like cargo adapter 1 (bicdl1) (Danio rerio (Zebrafish)).